The following is a 538-amino-acid chain: Putative cysteine ligase BshC (538 aa).

This sequence belongs to the BshC family.

In terms of biological role, involved in bacillithiol (BSH) biosynthesis. May catalyze the last step of the pathway, the addition of cysteine to glucosamine malate (GlcN-Mal) to generate BSH. This chain is Putative cysteine ligase BshC, found in Halalkalibacterium halodurans (strain ATCC BAA-125 / DSM 18197 / FERM 7344 / JCM 9153 / C-125) (Bacillus halodurans).